The following is a 490-amino-acid chain: Nuclear distribution protein PAC1 (490 aa).

Residues 65–96 (STVLRLQKKIIDLENEIHNLTNIINTTNSETN) are a coiled coil. WD repeat units follow at residues 118–157 (QCEN…NTIP), 163–204 (AHTR…RTLN), 205–245 (GHEH…CLKS), 251–290 (EWCR…GVAM), 293–327 (GHTH…FPSI), 328–367 (PSEL…LIPH), 388–427 (GHSS…ETGS), and 436–487 (GHEG…NSIK).

This sequence belongs to the WD repeat LIS1/nudF family. Self-associates. Interacts with NDL1 and dynein.

It is found in the cytoplasm. Its subcellular location is the cytoskeleton. The protein localises to the spindle pole. Functionally, positively regulates the activity of the minus-end directed microtubule motor protein dynein. Plays a central role in positioning the mitotic spindle at the bud neck during cell division. Targets cytoplasmic dynein to microtubule plus ends, thereby promoting dynein-mediated microtubule sliding along the bud cortex and consequently the movement of the mitotic spindle to the bud neck. The protein is Nuclear distribution protein PAC1 of Candida tropicalis (strain ATCC MYA-3404 / T1) (Yeast).